The primary structure comprises 485 residues: Hexokinase (485 aa).

S15 carries the post-translational modification Phosphoserine. In terms of domain architecture, Hexokinase spans A21–C468. Residues T75 to I208 form a hexokinase small subdomain region. Position 111 (K111) interacts with ATP. The glucose-binding stretch occupies residues P151–F177. Residues N209–D457 form a hexokinase large subdomain region.

In terms of assembly, monomer and homodimer. The monomeric form is active, the homodimeric form inactive.

It carries out the reaction a D-hexose + ATP = a D-hexose 6-phosphate + ADP + H(+). The catalysed reaction is D-fructose + ATP = D-fructose 6-phosphate + ADP + H(+). It catalyses the reaction D-glucose + ATP = D-glucose 6-phosphate + ADP + H(+). Its pathway is carbohydrate metabolism; hexose metabolism. The protein operates within carbohydrate degradation; glycolysis; D-glyceraldehyde 3-phosphate and glycerone phosphate from D-glucose: step 1/4. Functionally, catalyzes the phosphorylation of hexose, such as D-glucose and D-fructose, to hexose 6-phosphate (D-glucose 6-phosphate and D-fructose 6-phosphate, respectively). Has higher affinity for D-glucose. Mediates the initial step of glycolysis by catalyzing phosphorylation of D-glucose to D-glucose 6-phosphate. This Kluyveromyces lactis (strain ATCC 8585 / CBS 2359 / DSM 70799 / NBRC 1267 / NRRL Y-1140 / WM37) (Yeast) protein is Hexokinase (RAG5).